Reading from the N-terminus, the 774-residue chain is MPKTTTRTPGRLSGKFWKLLGAATEKNQGRSLAQVKASADYETKAADLDDEQLRKAAELLRLEDLSESADIPQFLAIAREAAERSTSLRPFDVQLLGALRMLAGDVVEMATGEGKTLSGAIAAAGYALGGRSVHVITINDYLARRDAEWMGPLIEALGLTVGWITAESTAEERRRAYTCDVTYASVNEIGFDVLRDQLVTDVADLVSPNPDVALIDEADSVLVDEALVPLVLAGTSHRETPRVELIRMVGELTPGRDFDTDTDSRNVHLTDEGARKLEAKLGGIDLYSEEHVGTTLTEVNVALHAHVLLQRDVHYIVRDDAVHLINSSRGRIAQLQRWPDGLQAAVEAKEGIATTETGEVLDTITVQALINRYPTVCGMTGTALAAGEQLRQFYKLGVSPIEPNKPNIREDESDRVYVTAAAKIDAIIEHIEEVHKTGQPVLVGTHDVAESEELHEKLVKRGVPAVVLNAKNDAEEARVIAEAGKLGAVTVSTQMAGRGTDIRLGGSDEGDHDEVAELGGLHVVGTGRHNTQRLDNQLRGRAGRQGDPGSSVFFSSWEDELVQAHLEPNKRPMQADENGRVLTDKAAALLDHAQRVAEGRLLDVHANTWRYNQLTAQQRAIIVERRDALLRTPTAREELAELSPKRYAELAEELSEERLERICRLIMLYHLDRGWCEHLAYLADIRESIHLRALGRQNPLDEFHRMAVDAFASLAADAIEAAQQTFETAPSFEDEPGVDLSKLARPTSTWTYMVHDNPLADDTMAALSLPGVFR.

ATP-binding positions include glutamine 94, 112-116 (GEGKT), and aspartate 501.

Belongs to the SecA family. Monomer and homodimer. Part of the essential Sec protein translocation apparatus which comprises SecA, SecYEG and auxiliary proteins SecDF. Other proteins may also be involved.

Its subcellular location is the cell membrane. The protein localises to the cytoplasm. It catalyses the reaction ATP + H2O + cellular proteinSide 1 = ADP + phosphate + cellular proteinSide 2.. In terms of biological role, part of the Sec protein translocase complex. Interacts with the SecYEG preprotein conducting channel. Has a central role in coupling the hydrolysis of ATP to the transfer of proteins into and across the cell membrane, serving as an ATP-driven molecular motor driving the stepwise translocation of polypeptide chains across the membrane. This chain is Protein translocase subunit SecA 2, found in Mycobacterium sp. (strain JLS).